Here is a 344-residue protein sequence, read N- to C-terminus: Protein pelota homolog (344 aa).

The protein belongs to the eukaryotic release factor 1 family. Pelota subfamily. As to quaternary structure, monomer. A divalent metal cation is required as a cofactor.

Its subcellular location is the cytoplasm. Functionally, may function in recognizing stalled ribosomes, interact with stem-loop structures in stalled mRNA molecules, and effect endonucleolytic cleavage of the mRNA. May play a role in the release non-functional ribosomes and degradation of damaged mRNAs. Has endoribonuclease activity. This Archaeoglobus fulgidus (strain ATCC 49558 / DSM 4304 / JCM 9628 / NBRC 100126 / VC-16) protein is Protein pelota homolog.